Consider the following 119-residue polypeptide: Ribonuclease P protein component (119 aa).

Belongs to the RnpA family. As to quaternary structure, consists of a catalytic RNA component (M1 or rnpB) and a protein subunit.

It catalyses the reaction Endonucleolytic cleavage of RNA, removing 5'-extranucleotides from tRNA precursor.. In terms of biological role, RNaseP catalyzes the removal of the 5'-leader sequence from pre-tRNA to produce the mature 5'-terminus. It can also cleave other RNA substrates such as 4.5S RNA. The protein component plays an auxiliary but essential role in vivo by binding to the 5'-leader sequence and broadening the substrate specificity of the ribozyme. In Mycobacterium avium (strain 104), this protein is Ribonuclease P protein component.